The following is a 280-amino-acid chain: Succinate dehydrogenase [ubiquinone] iron-sulfur subunit, mitochondrial (280 aa).

The transit peptide at 1–28 (MAAVVALSLRRRFPAAALGGARLQACRG) directs the protein to the mitochondrion. The 2Fe-2S ferredoxin-type domain occupies 40 to 133 (KKFAIYRWDP…VSKIYPLPHM (94 aa)). 2 positions are modified to N6-acetyllysine: lysine 51 and lysine 55. 4 residues coordinate [2Fe-2S] cluster: cysteine 93, cysteine 98, cysteine 101, and cysteine 113. An interaction with SDHAF1 region spans residues 146–218 (FYAQYKSIEP…PAVLMQAYRW (73 aa)). The 4Fe-4S ferredoxin-type domain occupies 176 to 206 (DREKLDGLYECILCACCSTSCPSYWWNGDKY). Positions 186, 189, and 192 each coordinate [4Fe-4S] cluster. A [3Fe-4S] cluster-binding site is contributed by cysteine 196. An a ubiquinone-binding site is contributed by tryptophan 201. Cysteine 243 and cysteine 249 together coordinate [3Fe-4S] cluster. A [4Fe-4S] cluster-binding site is contributed by cysteine 253.

It belongs to the succinate dehydrogenase/fumarate reductase iron-sulfur protein family. In terms of assembly, component of complex II composed of four subunits: the flavoprotein (FP) SDHA, iron-sulfur protein (IP) SDHB, and a cytochrome b560 composed of SDHC and SDHD. Interacts with SDHAF1; the interaction is required for iron-sulfur cluster incorporation into SDHB. It depends on [2Fe-2S] cluster as a cofactor. [3Fe-4S] cluster is required as a cofactor. The cofactor is [4Fe-4S] cluster.

It is found in the mitochondrion inner membrane. The enzyme catalyses a quinone + succinate = fumarate + a quinol. The catalysed reaction is (R)-malate + a quinone = enol-oxaloacetate + a quinol. It catalyses the reaction (S)-malate + a quinone = enol-oxaloacetate + a quinol. Its pathway is carbohydrate metabolism; tricarboxylic acid cycle; fumarate from succinate (eukaryal route): step 1/1. Enol-oxaloacetate inhibits the succinate dehydrogenase activity. Its function is as follows. Iron-sulfur protein (IP) subunit of the succinate dehydrogenase complex (mitochondrial respiratory chain complex II), responsible for transferring electrons from succinate to ubiquinone (coenzyme Q). SDH also oxidizes malate to the non-canonical enol form of oxaloacetate, enol-oxaloacetate. Enol-oxaloacetate, which is a potent inhibitor of the succinate dehydrogenase activity, is further isomerized into keto-oxaloacetate. The protein is Succinate dehydrogenase [ubiquinone] iron-sulfur subunit, mitochondrial (SDHB) of Bos taurus (Bovine).